Consider the following 35-residue polypeptide: DLVQFGQMILKVAGRSLPKSYGAYGCYCGWGGRGK.

Positions 27, 29, and 31 each coordinate Ca(2+).

The protein belongs to the phospholipase A2 family. Group II subfamily. D49 sub-subfamily. As to quaternary structure, dimer. Requires Ca(2+) as cofactor. As to expression, expressed by the venom gland.

It localises to the secreted. It catalyses the reaction a 1,2-diacyl-sn-glycero-3-phosphocholine + H2O = a 1-acyl-sn-glycero-3-phosphocholine + a fatty acid + H(+). In terms of biological role, snake venom phospholipase A2 (PLA2) that shows presynaptic neurotoxicity. 10 ug/ml of this protein produce complete neuromuscular blockade up to 80 minutes, without inhibiting the responses to acetylcholine (ACh) and potassium chloride (KCl). In addition, it produces a calcium-dependent blockade of acetylcholine release and causes appearance of giant miniature end-plate potentials. PLA2 catalyzes the calcium-dependent hydrolysis of the 2-acyl groups in 3-sn-phosphoglycerides. The polypeptide is Phospholipase A2 neuwieditoxin-1 (Bothrops pauloensis (Neuwied's lancehead)).